A 196-amino-acid polypeptide reads, in one-letter code: UPF0301 protein BT_1078 (196 aa).

It belongs to the UPF0301 (AlgH) family.

This Bacteroides thetaiotaomicron (strain ATCC 29148 / DSM 2079 / JCM 5827 / CCUG 10774 / NCTC 10582 / VPI-5482 / E50) protein is UPF0301 protein BT_1078.